A 65-amino-acid polypeptide reads, in one-letter code: Large ribosomal subunit protein bL35 (65 aa).

Over residues 1 to 43 (MPKMKTRRGAAKRFAKTGSGKFKRRKQGLRHILTKKTAKRKSR) the composition is skewed to basic residues. The disordered stretch occupies residues 1–49 (MPKMKTRRGAAKRFAKTGSGKFKRRKQGLRHILTKKTAKRKSRLGQSAT).

This sequence belongs to the bacterial ribosomal protein bL35 family.

The protein is Large ribosomal subunit protein bL35 of Maridesulfovibrio salexigens (strain ATCC 14822 / DSM 2638 / NCIMB 8403 / VKM B-1763) (Desulfovibrio salexigens).